The chain runs to 471 residues: UDP-N-acetylmuramate--L-alanine ligase (471 aa).

ATP is bound at residue 114–120; it reads GTHGKTT.

This sequence belongs to the MurCDEF family.

The protein localises to the cytoplasm. It catalyses the reaction UDP-N-acetyl-alpha-D-muramate + L-alanine + ATP = UDP-N-acetyl-alpha-D-muramoyl-L-alanine + ADP + phosphate + H(+). It participates in cell wall biogenesis; peptidoglycan biosynthesis. In terms of biological role, cell wall formation. The chain is UDP-N-acetylmuramate--L-alanine ligase from Rhizobium meliloti (strain 1021) (Ensifer meliloti).